We begin with the raw amino-acid sequence, 124 residues long: UPF0342 protein DSY2926 (124 aa).

It belongs to the UPF0342 family.

In Desulfitobacterium hafniense (strain Y51), this protein is UPF0342 protein DSY2926.